Consider the following 503-residue polypeptide: MGKLYIFDTTLRDGEQTPGVNLNKEEKLEIAKQLAKLNVDIIEAGFPIASPGEFEAVKNIAEKVKGPIIAALARAIPMDIDRAWEAIKYSESPRIHTFIATSDIHIEKKLKKTRDEVLEQAVSAVKYAKRYCSDVEFSAEDAVRSDFNFLVKIFEAVIEAGATVINVPDTVGYALPWEFGELIRRLKENIRNIDKARVSVHCHNDLGLATANSLSAIVNGAEQVECTVNGLGERAGNAAMEEIVMAIKVRRLPFEVSIKTEEIYKTSKLVSNLTGIPIQPNKAIVGENAFAHESGIHQHGVIQDPSTYEIIDPKTIGIPESKIVLGKHSGKHAFEKRLQELGYSLPPDQLEEAFRRFKELADKKKEITDKDIEALVSNQIRIIPEYYKLRHLQVVSGIGIVPTATIIISENGEEIKTVEIGNGPVDAVYKAITKAVKVPHSLEDFSLKSVTGGTDALGEAMVKLSDKDGNIYVGRATSTDVIEASALAYLRALNQLVMLKGKD.

The 261-residue stretch at 4–264 (LYIFDTTLRD…EVSIKTEEIY (261 aa)) folds into the Pyruvate carboxyltransferase domain. Aspartate 13, histidine 201, histidine 203, and asparagine 237 together coordinate Mn(2+). Residues 388 to 503 (KLRHLQVVSG…NQLVMLKGKD (116 aa)) are regulatory domain.

This sequence belongs to the alpha-IPM synthase/homocitrate synthase family. LeuA type 1 subfamily. In terms of assembly, homodimer. The cofactor is Mn(2+).

The protein localises to the cytoplasm. The enzyme catalyses 3-methyl-2-oxobutanoate + acetyl-CoA + H2O = (2S)-2-isopropylmalate + CoA + H(+). The protein operates within amino-acid biosynthesis; L-leucine biosynthesis; L-leucine from 3-methyl-2-oxobutanoate: step 1/4. In terms of biological role, catalyzes the condensation of the acetyl group of acetyl-CoA with 3-methyl-2-oxobutanoate (2-ketoisovalerate) to form 3-carboxy-3-hydroxy-4-methylpentanoate (2-isopropylmalate). This is 2-isopropylmalate synthase from Dictyoglomus turgidum (strain DSM 6724 / Z-1310).